A 310-amino-acid polypeptide reads, in one-letter code: L-lactate dehydrogenase (310 aa).

NAD(+) contacts are provided by residues methionine 10–valine 11, aspartate 32, tyrosine 62, and glycine 76–valine 77. Substrate is bound by residues glutamine 79, arginine 85, and asparagine 117–aspartate 120. NAD(+)-binding positions include alanine 115–asparagine 117 and serine 140. Aspartate 145–arginine 148 is a substrate binding site. Beta-D-fructose 1,6-bisphosphate-binding positions include arginine 150 and glutamine 162–tyrosine 167. Histidine 172 (proton acceptor) is an active-site residue. Tyrosine 218 is subject to Phosphotyrosine. Position 227 (threonine 227) interacts with substrate.

The protein belongs to the LDH/MDH superfamily. LDH family. As to quaternary structure, homotetramer.

The protein localises to the cytoplasm. It catalyses the reaction (S)-lactate + NAD(+) = pyruvate + NADH + H(+). It functions in the pathway fermentation; pyruvate fermentation to lactate; (S)-lactate from pyruvate: step 1/1. With respect to regulation, allosterically activated by fructose 1,6-bisphosphate (FBP). It binds two fructose 1,6-bisphosphate (FBP) molecules per tetramer. Catalyzes the conversion of lactate to pyruvate. The polypeptide is L-lactate dehydrogenase (Thermus caldophilus).